We begin with the raw amino-acid sequence, 112 residues long: Putative pterin-4-alpha-carbinolamine dehydratase (112 aa).

Belongs to the pterin-4-alpha-carbinolamine dehydratase family.

It catalyses the reaction (4aS,6R)-4a-hydroxy-L-erythro-5,6,7,8-tetrahydrobiopterin = (6R)-L-erythro-6,7-dihydrobiopterin + H2O. This chain is Putative pterin-4-alpha-carbinolamine dehydratase, found in Photobacterium profundum (strain SS9).